Consider the following 424-residue polypeptide: Serine--tRNA ligase (424 aa).

Residue 232-234 (TAE) coordinates L-serine. 263 to 265 (RRE) provides a ligand contact to ATP. An L-serine-binding site is contributed by Glu286. An ATP-binding site is contributed by 350 to 353 (EISS). Ser384 contributes to the L-serine binding site.

The protein belongs to the class-II aminoacyl-tRNA synthetase family. Type-1 seryl-tRNA synthetase subfamily. Homodimer. The tRNA molecule binds across the dimer.

Its subcellular location is the cytoplasm. The catalysed reaction is tRNA(Ser) + L-serine + ATP = L-seryl-tRNA(Ser) + AMP + diphosphate + H(+). The enzyme catalyses tRNA(Sec) + L-serine + ATP = L-seryl-tRNA(Sec) + AMP + diphosphate + H(+). The protein operates within aminoacyl-tRNA biosynthesis; selenocysteinyl-tRNA(Sec) biosynthesis; L-seryl-tRNA(Sec) from L-serine and tRNA(Sec): step 1/1. Catalyzes the attachment of serine to tRNA(Ser). Is also able to aminoacylate tRNA(Sec) with serine, to form the misacylated tRNA L-seryl-tRNA(Sec), which will be further converted into selenocysteinyl-tRNA(Sec). This chain is Serine--tRNA ligase, found in Prochlorococcus marinus subsp. pastoris (strain CCMP1986 / NIES-2087 / MED4).